Consider the following 1240-residue polypeptide: ABC transporter B family member 17 (1240 aa).

Residues 35–324 form the ABC transmembrane type-1 1 domain; the sequence is MALGLIGAVG…SLSNLKYFSE (290 aa). The chain crosses the membrane as a helical span at residues 36–56; sequence ALGLIGAVGDGFITPVVVFIF. N70 carries N-linked (GlcNAc...) asparagine glycosylation. 5 consecutive transmembrane segments (helical) span residues 81–101, 158–180, 184–206, 264–284, and 296–316; these read VVAL…EGYC, LPNF…ILMW, IVGF…ALVS, GITI…TWYG, and GTVF…GQSL. Residues 359-595 enclose the ABC transporter 1 domain; the sequence is VEFNHVKFTY…IDGQYTSLVS (237 aa). 394 to 401 is an ATP binding site; the sequence is GGSGSGKS. N-linked (GlcNAc...) asparagine glycosylation is found at N542, N609, and N642. The ABC transmembrane type-1 2 domain occupies 672-960; that stretch reads ALYGCLSAAL…AGTMTTDLAR (289 aa). Helical transmembrane passes span 681–701 and 714–734; these read LVGV…SVFF and IYVL…ISQH. A glycan (N-linked (GlcNAc...) asparagine) is linked at N769. 4 consecutive transmembrane segments (helical) span residues 793 to 815, 817 to 839, 896 to 919, and 923 to 943; these read MSLL…VIAW, LAIV…RVLL, WLAG…NFWY, and LIAD…IFVT. One can recognise an ABC transporter 2 domain in the interval 995-1233; that stretch reads ITFLNVDFAY…GPTGTYFSLA (239 aa). An N-linked (GlcNAc...) asparagine glycan is attached at N1015. 1030-1037 lines the ATP pocket; it reads GTSGSGKS.

Belongs to the ABC transporter superfamily. ABCB family. Multidrug resistance exporter (TC 3.A.1.201) subfamily.

It is found in the membrane. In Arabidopsis thaliana (Mouse-ear cress), this protein is ABC transporter B family member 17 (ABCB17).